Reading from the N-terminus, the 696-residue chain is D-(-)-3-hydroxybutyrate oligomer hydrolase (696 aa).

Residues Met1 to Asn26 form the signal peptide. Ser309 (charge relay system) is an active-site residue.

It belongs to the D-(-)-3-hydroxybutyrate oligomer hydrolase family.

Its subcellular location is the secreted. It catalyses the reaction (3R)-hydroxybutanoate dimer + H2O = 2 (R)-3-hydroxybutanoate + H(+). The protein operates within lipid metabolism; butanoate metabolism. Its function is as follows. Participates in the degradation of poly-3-hydroxybutyrate (PHB). It works downstream of poly(3-hydroxybutyrate) depolymerase, hydrolyzing D(-)-3-hydroxybutyrate oligomers of various length (3HB-oligomers) into 3HB-monomers. The protein is D-(-)-3-hydroxybutyrate oligomer hydrolase of Burkholderia vietnamiensis (strain G4 / LMG 22486) (Burkholderia cepacia (strain R1808)).